The primary structure comprises 464 residues: Siroheme synthase (464 aa).

Positions 1–203 (MEFLPLFHNL…GQGAEAERLL (203 aa)) are precorrin-2 dehydrogenase /sirohydrochlorin ferrochelatase. Residues 22-23 (EI) and 43-44 (PE) each bind NAD(+). S128 carries the post-translational modification Phosphoserine. The tract at residues 216–464 (GEVYLVGAGP…AWFEGAQATL (249 aa)) is uroporphyrinogen-III C-methyltransferase. P225 provides a ligand contact to S-adenosyl-L-methionine. The Proton acceptor role is filled by D248. The active-site Proton donor is the K270. S-adenosyl-L-methionine is bound by residues 301 to 303 (GGD), I306, 331 to 332 (TA), M383, and G412.

In the N-terminal section; belongs to the precorrin-2 dehydrogenase / sirohydrochlorin ferrochelatase family. The protein in the C-terminal section; belongs to the precorrin methyltransferase family.

The catalysed reaction is uroporphyrinogen III + 2 S-adenosyl-L-methionine = precorrin-2 + 2 S-adenosyl-L-homocysteine + H(+). The enzyme catalyses precorrin-2 + NAD(+) = sirohydrochlorin + NADH + 2 H(+). It catalyses the reaction siroheme + 2 H(+) = sirohydrochlorin + Fe(2+). The protein operates within cofactor biosynthesis; adenosylcobalamin biosynthesis; precorrin-2 from uroporphyrinogen III: step 1/1. It participates in cofactor biosynthesis; adenosylcobalamin biosynthesis; sirohydrochlorin from precorrin-2: step 1/1. Its pathway is porphyrin-containing compound metabolism; siroheme biosynthesis; precorrin-2 from uroporphyrinogen III: step 1/1. It functions in the pathway porphyrin-containing compound metabolism; siroheme biosynthesis; siroheme from sirohydrochlorin: step 1/1. The protein operates within porphyrin-containing compound metabolism; siroheme biosynthesis; sirohydrochlorin from precorrin-2: step 1/1. Functionally, multifunctional enzyme that catalyzes the SAM-dependent methylations of uroporphyrinogen III at position C-2 and C-7 to form precorrin-2 via precorrin-1. Then it catalyzes the NAD-dependent ring dehydrogenation of precorrin-2 to yield sirohydrochlorin. Finally, it catalyzes the ferrochelation of sirohydrochlorin to yield siroheme. This chain is Siroheme synthase, found in Pseudomonas syringae pv. tomato (strain ATCC BAA-871 / DC3000).